A 570-amino-acid polypeptide reads, in one-letter code: Formate--tetrahydrofolate ligase (570 aa).

Residue 65 to 72 participates in ATP binding; sequence TPHGEGKT.

The protein belongs to the formate--tetrahydrofolate ligase family.

It catalyses the reaction (6S)-5,6,7,8-tetrahydrofolate + formate + ATP = (6R)-10-formyltetrahydrofolate + ADP + phosphate. The protein operates within one-carbon metabolism; tetrahydrofolate interconversion. This is Formate--tetrahydrofolate ligase from Shewanella oneidensis (strain ATCC 700550 / JCM 31522 / CIP 106686 / LMG 19005 / NCIMB 14063 / MR-1).